We begin with the raw amino-acid sequence, 201 residues long: Large ribosomal subunit protein uL4 (201 aa).

Residues 44–68 (RAQKSRADVSGSGRKPWRQKGTGRA) form a disordered region.

This sequence belongs to the universal ribosomal protein uL4 family. Part of the 50S ribosomal subunit.

Functionally, one of the primary rRNA binding proteins, this protein initially binds near the 5'-end of the 23S rRNA. It is important during the early stages of 50S assembly. It makes multiple contacts with different domains of the 23S rRNA in the assembled 50S subunit and ribosome. Forms part of the polypeptide exit tunnel. The sequence is that of Large ribosomal subunit protein uL4 from Buchnera aphidicola subsp. Schizaphis graminum (strain Sg).